Consider the following 322-residue polypeptide: Mitochondrial uncoupling protein 4 (322 aa).

Solcar repeat units follow at residues 20–114 (SKFL…LREV), 124–216 (YPLW…VKHY), and 225–316 (DNIS…IREM). 6 helical membrane-spanning segments follow: residues 22–39 (FLLSGCAATVAELATFPL), 87–108 (WQGVTPAIYRHVVYSGGRMVTY), 126–143 (LWKSVIGGMMAGVIGQFL), 194–211 (PNIQRAALVNMGDLTTYD), 228–247 (STHGLSSLCSGLVASILGTP), and 287–310 (SLYKGFLPSWLRMTPWSMVFWLTY).

This sequence belongs to the mitochondrial carrier (TC 2.A.29) family. In terms of assembly, homotetramer.

Its subcellular location is the mitochondrion inner membrane. It is found in the cell projection. The protein localises to the neuron projection. It catalyses the reaction H(+)(in) = H(+)(out). The catalysed reaction is chloride(in) = chloride(out). In terms of biological role, facilitates proton transport across the inner mitochondrial membrane and may dissipate excessive proton gradient associated with oxidative and metabolic stress at neuronal synapses. Regulates glutamate-induced proton conductance in astrocytes, shifting the energy metabolism toward aerobic glycolysis and lactate transfer to neurons for ATP synthesis. Can transport chloride ions with lower efficiency. The transport mechanism remains to be elucidated. The polypeptide is Mitochondrial uncoupling protein 4 (Mus musculus (Mouse)).